Here is a 205-residue protein sequence, read N- to C-terminus: MEIACLDLEGVLVPEIWIAFAEKTGIDALKATTRDIPDYDVLMKQRLRILDEHGLKLGDIQEVIATLKPLEGAVEFVDWLRERFQVVILSDTFYEFSQPLMRQLGFPTLLCHKLEIDDSDRVVGYQLRQKDPKRQSVIAFKSLYYRVIAAGDSYNDTTMLSEAHAGILFHAPENVIREFPQFPAVHTYEDLKREFLKASSRSLSL.

Aspartate 7 functions as the Nucleophile in the catalytic mechanism. The Mg(2+) site is built by aspartate 7 and glutamate 9. The Proton donor role is filled by glutamate 9. Substrate contacts are provided by residues glutamate 15, arginine 46, 90-91 (SD), and lysine 133. Aspartate 152 serves as a coordination point for Mg(2+). Residue asparagine 155 coordinates substrate.

It belongs to the thrH family. Mg(2+) serves as cofactor.

It carries out the reaction O-phospho-L-serine + H2O = L-serine + phosphate. The enzyme catalyses O-phospho-D-serine + H2O = D-serine + phosphate. The protein operates within amino-acid biosynthesis; L-serine biosynthesis; L-serine from 3-phospho-D-glycerate: step 3/3. Phosphoserine phosphatase that mediates dephosphorylation of phosphoserine in the serine biosynthesis pathway. Also able to dephosphorylate other substrates such as phospho-L(or D)-threonine, with lower activity. Shows phosphoserine:homoserine phosphotransferase activity by transferring the phosphoryl group to homoserine using phosphoserine as the phosphoryl group donor. This Pseudomonas aeruginosa (strain ATCC 15692 / DSM 22644 / CIP 104116 / JCM 14847 / LMG 12228 / 1C / PRS 101 / PAO1) protein is Phosphoserine phosphatase ThrH (thrH).